We begin with the raw amino-acid sequence, 22 residues long: thr operon leader peptide (22 aa).

This sequence belongs to the thr operon leader peptide family.

Its function is as follows. This protein is involved in control of the biosynthesis of threonine. The sequence is that of thr operon leader peptide from Yersinia pestis bv. Antiqua (strain Antiqua).